The primary structure comprises 148 residues: Large ribosomal subunit protein bL9 (148 aa).

The protein belongs to the bacterial ribosomal protein bL9 family.

In terms of biological role, binds to the 23S rRNA. The protein is Large ribosomal subunit protein bL9 of Salinispora tropica (strain ATCC BAA-916 / DSM 44818 / JCM 13857 / NBRC 105044 / CNB-440).